The chain runs to 180 residues: NAD(P)H-quinone oxidoreductase subunit I, chloroplastic (180 aa).

4Fe-4S ferredoxin-type domains lie at 55 to 84 (GRIHFEFDKCIACEVCVRVCPIDLPVVDWR) and 95 to 124 (LNYSIDFGICIFCGNCVEYCPTNCLSMTEE). Residues C64, C67, C70, C74, C104, C107, C110, and C114 each coordinate [4Fe-4S] cluster.

It belongs to the complex I 23 kDa subunit family. NDH is composed of at least 16 different subunits, 5 of which are encoded in the nucleus. [4Fe-4S] cluster is required as a cofactor.

The protein resides in the plastid. It localises to the chloroplast thylakoid membrane. It catalyses the reaction a plastoquinone + NADH + (n+1) H(+)(in) = a plastoquinol + NAD(+) + n H(+)(out). The enzyme catalyses a plastoquinone + NADPH + (n+1) H(+)(in) = a plastoquinol + NADP(+) + n H(+)(out). Functionally, NDH shuttles electrons from NAD(P)H:plastoquinone, via FMN and iron-sulfur (Fe-S) centers, to quinones in the photosynthetic chain and possibly in a chloroplast respiratory chain. The immediate electron acceptor for the enzyme in this species is believed to be plastoquinone. Couples the redox reaction to proton translocation, and thus conserves the redox energy in a proton gradient. In Liriodendron tulipifera (Tuliptree), this protein is NAD(P)H-quinone oxidoreductase subunit I, chloroplastic.